A 314-amino-acid chain; its full sequence is Oxalate oxidoreductase subunit beta (314 aa).

4 residues coordinate [4Fe-4S] cluster: cysteine 24, cysteine 27, cysteine 52, and cysteine 225.

In terms of assembly, dimer of heterotrimer of one alpha, one beta and one delta subunit. It depends on [4Fe-4S] cluster as a cofactor.

The catalysed reaction is oxidized 2[4Fe-4S]-[ferredoxin] + oxalate = reduced 2[4Fe-4S]-[ferredoxin] + 2 CO2. Its function is as follows. Catalyzes the anaerobic oxidation of oxalate using a broad range of electron acceptors, including ferredoxin and the nickel-dependent carbon monoxide dehydrogenase. Does not require coenzyme A as cosubstrate. Enables anaerobic growth on oxalate which is used as energy source by the bacteria. This chain is Oxalate oxidoreductase subunit beta, found in Moorella thermoacetica (strain ATCC 39073 / JCM 9320).